Consider the following 229-residue polypeptide: Flagellar L-ring protein (229 aa).

A signal peptide spans 1 to 23; the sequence is MLSRLGARALVCLAGVAMLAASG. Residue C24 is the site of N-palmitoyl cysteine attachment. A lipid anchor (S-diacylglycerol cysteine) is attached at C24.

Belongs to the FlgH family. In terms of assembly, the basal body constitutes a major portion of the flagellar organelle and consists of four rings (L,P,S, and M) mounted on a central rod.

Its subcellular location is the cell outer membrane. The protein localises to the bacterial flagellum basal body. In terms of biological role, assembles around the rod to form the L-ring and probably protects the motor/basal body from shearing forces during rotation. In Cupriavidus taiwanensis (strain DSM 17343 / BCRC 17206 / CCUG 44338 / CIP 107171 / LMG 19424 / R1) (Ralstonia taiwanensis (strain LMG 19424)), this protein is Flagellar L-ring protein.